The primary structure comprises 401 residues: Exodeoxyribonuclease 7 large subunit (401 aa).

It belongs to the XseA family. As to quaternary structure, heterooligomer composed of large and small subunits.

Its subcellular location is the cytoplasm. It carries out the reaction Exonucleolytic cleavage in either 5'- to 3'- or 3'- to 5'-direction to yield nucleoside 5'-phosphates.. In terms of biological role, bidirectionally degrades single-stranded DNA into large acid-insoluble oligonucleotides, which are then degraded further into small acid-soluble oligonucleotides. The polypeptide is Exodeoxyribonuclease 7 large subunit (Clostridium botulinum (strain Langeland / NCTC 10281 / Type F)).